Here is a 217-residue protein sequence, read N- to C-terminus: Frataxin, mitochondrial (217 aa).

The N-terminal 42 residues, 1–42 (MWTLGRRSVASFLPRSALPGFAPTRAGAPRPAKDLSLSGLPG), are a transit peptide targeting the mitochondrion.

This sequence belongs to the frataxin family. Component of the mitochondrial core iron-sulfur cluster (ISC) complex composed of NFS1, LYRM4, NDUFAB1, ISCU, FXN, and FDX2; this complex is a heterohexamer containing two copies of each monomer. Homodimer. Monomer (probable predominant form). Oligomer. Monomers and polymeric aggregates of &gt;1 MDa have been isolated from mitochondria. A small fraction of heterologous overexpressed recombinant frataxin forms high-molecular weight aggregates that incorporate iron. Interacts with LYRM4. Interacts (via ferrous form) with ISCU; the interaction is possible when both are bound to the dimeric form of the cysteine desulfurase complex (NFS1:LYRM4) and the interaction enhances FXN interaction to the dimeric form of the cysteine desulfurase complex (NFS1:LYRM4). Interacts with FECH; one iron-bound FXN monomer seems to interact with a FECH homodimer. Interacts with SDHA and SDHB. Interacts with ACO2; the interaction is dependent on citrate. Interacts with HSPA9. As to quaternary structure, interacts with ACO1. Interacts with ISCU (cytoplasmic form). Post-translationally, processed in two steps by mitochondrial processing peptidase (MPP). MPP first cleaves the precursor to intermediate form and subsequently converts the intermediate to yield frataxin mature form (frataxin(81-210)) which is the predominant form. The additional forms, frataxin(56-210) and frataxin(78-210), seem to be produced when the normal maturation process is impaired; their physiological relevance is unsure.

Its subcellular location is the mitochondrion. The protein resides in the cytoplasm. The protein localises to the cytosol. The catalysed reaction is 4 Fe(2+) + O2 + 4 H(+) = 4 Fe(3+) + 2 H2O. Functionally, functions as an activator of persulfide transfer to the scaffoding protein ISCU as component of the core iron-sulfur cluster (ISC) assembly complex and participates to the [2Fe-2S] cluster assembly. Accelerates sulfur transfer from NFS1 persulfide intermediate to ISCU and to small thiols such as L-cysteine and glutathione leading to persulfuration of these thiols and ultimately sulfide release. Binds ferrous ion and is released from FXN upon the addition of both L-cysteine and reduced FDX2 during [2Fe-2S] cluster assembly. The core iron-sulfur cluster (ISC) assembly complex is involved in the de novo synthesis of a [2Fe-2S] cluster, the first step of the mitochondrial iron-sulfur protein biogenesis. This process is initiated by the cysteine desulfurase complex (NFS1:LYRM4:NDUFAB1) that produces persulfide which is delivered on the scaffold protein ISCU in a FXN-dependent manner. Then this complex is stabilized by FDX2 which provides reducing equivalents to accomplish the [2Fe-2S] cluster assembly. Finally, the [2Fe-2S] cluster is transferred from ISCU to chaperone proteins, including HSCB, HSPA9 and GLRX5. May play a role in the protection against iron-catalyzed oxidative stress through its ability to catalyze the oxidation of Fe(2+) to Fe(3+); the oligomeric form but not the monomeric form has in vitro ferroxidase activity. May be able to store large amounts of iron in the form of a ferrihydrite mineral by oligomerization; however, the physiological relevance is unsure as reports are conflicting and the function has only been shown using heterologous overexpression systems. May function as an iron chaperone protein that protects the aconitase [4Fe-4S]2+ cluster from disassembly and promotes enzyme reactivation. May play a role as a high affinity iron binding partner for FECH that is capable of both delivering iron to ferrochelatase and mediating the terminal step in mitochondrial heme biosynthesis. Modulates the RNA-binding activity of ACO1. May be involved in the cytoplasmic iron-sulfur protein biogenesis. May contribute to oxidative stress resistance and overall cell survival. This chain is Frataxin, mitochondrial, found in Bos taurus (Bovine).